A 467-amino-acid chain; its full sequence is tRNA-2-methylthio-N(6)-dimethylallyladenosine synthase (467 aa).

The segment at 1–20 (MSDDTTQIEPAMAQETSPRA) is disordered. In terms of domain architecture, MTTase N-terminal spans 23–143 (RKVFVKTYGC…LPNALARVRG (121 aa)). Residues Cys-32, Cys-68, Cys-106, Cys-184, Cys-188, and Cys-191 each coordinate [4Fe-4S] cluster. One can recognise a Radical SAM core domain in the interval 170–402 (RKRGVSAFLT…QALLSAQQYA (233 aa)). Residues 405–467 (DSMIGRKMDV…TNSLIAQKLA (63 aa)) form the TRAM domain.

It belongs to the methylthiotransferase family. MiaB subfamily. In terms of assembly, monomer. [4Fe-4S] cluster is required as a cofactor.

It is found in the cytoplasm. The catalysed reaction is N(6)-dimethylallyladenosine(37) in tRNA + (sulfur carrier)-SH + AH2 + 2 S-adenosyl-L-methionine = 2-methylsulfanyl-N(6)-dimethylallyladenosine(37) in tRNA + (sulfur carrier)-H + 5'-deoxyadenosine + L-methionine + A + S-adenosyl-L-homocysteine + 2 H(+). Its function is as follows. Catalyzes the methylthiolation of N6-(dimethylallyl)adenosine (i(6)A), leading to the formation of 2-methylthio-N6-(dimethylallyl)adenosine (ms(2)i(6)A) at position 37 in tRNAs that read codons beginning with uridine. The sequence is that of tRNA-2-methylthio-N(6)-dimethylallyladenosine synthase from Brucella melitensis biotype 1 (strain ATCC 23456 / CCUG 17765 / NCTC 10094 / 16M).